A 264-amino-acid polypeptide reads, in one-letter code: Osteopontin (264 aa).

Positions 1–16 (MKLAFLCLCFISIAAA) are cleaved as a signal peptide. 2 disordered regions span residues 21–141 (KSRQ…RGDS) and 166–264 (IEDD…EVTR). Residues 31–51 (SEEKYDPRSHHTHRYHQDHVD) are compositionally biased toward basic and acidic residues. Polar residues predominate over residues 52-73 (SQSQEHLQQTQNDLASLQQTHY). Over residues 97-118 (AVDDDDDDDNDSNDTDESDEVV) the composition is skewed to acidic residues. N106 and N109 each carry an N-linked (GlcNAc...) asparagine glycan. The short motif at 132–134 (RGD) is the Cell attachment site element. Basic and acidic residues predominate over residues 186 to 212 (KESREQDSRELAQHQSVENDSRPRFDS). N-linked (GlcNAc...) asparagine glycans are attached at residues N204 and N242. Residues 233 to 246 (ASRSAVDTSNQTLE) are compositionally biased toward polar residues. The segment covering 252–264 (EDRHSIENNEVTR) has biased composition (basic and acidic residues).

It belongs to the osteopontin family. Extensively phosphorylated on serine residues.

It is found in the secreted. Functionally, major non-collagenous bone protein that binds tightly to hydroxyapatite. Appears to form an integral part of the mineralized matrix. Probably important to cell-matrix interaction. Acts as a cytokine involved in enhancing production of interferon-gamma and interleukin-12 and reducing production of interleukin-10 and is essential in the pathway that leads to type I immunity. This is Osteopontin (SPP1) from Gallus gallus (Chicken).